We begin with the raw amino-acid sequence, 252 residues long: Uracil-DNA glycosylase (252 aa).

The Proton acceptor role is filled by aspartate 87.

It belongs to the uracil-DNA glycosylase (UDG) superfamily. UNG family.

It is found in the host nucleus. It carries out the reaction Hydrolyzes single-stranded DNA or mismatched double-stranded DNA and polynucleotides, releasing free uracil.. In terms of biological role, excises uracil residues from the DNA which can arise as a result of misincorporation of dUMP residues by DNA polymerase or deamination of cytosines. Therefore may reduce deleterious uracil incorporation into the viral genome, particularly in terminally differentiated cells which lack DNA repair enzymes. The polypeptide is Uracil-DNA glycosylase (46) (Saimiri sciureus (Common squirrel monkey)).